The primary structure comprises 982 residues: GPMGPSGPRGFQGPPGEPGEPGASGPMGPRGPPGPPGKNGDDGEAGKPGRPGERGPPGPQGARGIPGTAGIPGMKGHRGFSGIDGAKGDAGPAGPKGEPGSPGENGAPGQMGPRGIPGERGRPGPTGPAGARGNDGATGAAGPPGPTGPAGPPGFPGAVGAKGEAGPQGARGSEGPQGVRGEPGPPGPAGAAGPAGNPGADGQPGAKGANGAPGIAGAPGFPGARGPSGPQGPSGPPGPKGNSGEPGAPGSKGDAGAKGEPGPTGVQGPPGPAGEEGKRGAGEPGPTGIPGPPGERGGPGSRGFPGADGVAGPKGPAGERGAPGPAGPKGSPGEAGRPGEAGIPGAKGITGSPGSPGPDGKTGPPGPAGQDGRPGPPGPPGARGQAGVMGFPGPKGAAGEPGKAGERGVPGPPGAVGPAGKDGEAGAQGPPGSAGPAGERGEQGPAGSPGFQGIPGPAGPPGESGKPGEQGVPGDIGAPGPSGARGERGFPGERGVQGPPGPAGPRGAGDAGAPGAPGSQGAPGIQGMPGERGAAGIPGPKGDRGDAGPKGADGSPGKDGVRGITGPIGPPGPAGAPGDKGESGPSGPAGPTGARGAPGDRGEPGPPGPAGFAGPPGADGQPGAKGEPGDAGAKGDAGPAGPAGPTGPPGPIGNVGAPGPKGARGSAGPPGATGFPGAAGRVGPPGPAGNAGPPGPPGPVGKKGPRGETGPAGRPGEVGPPGPPGPAGEKGSPGSDGPAGAPGTPGPQGIAGQRGVVGIPGQRGERGFPGIPGPSGEPGKQGPSGASGERGPPGPIGPPGIAGPPGESGREGAPGAEGSPGRDGSPGPKGDRGEAGPAGPPGAPGAPGAPGPVGPAGKSGDRGETGPAGPAGPIGPTGARGPAGPQGPRGDKGETGEQGDRGFSGIQGPPGPPGSPGEQGPAGASGPAGPRGPPGSAGAPGKDGINGIPGPIGPPGPRGRTGPAGPRGPPGPPGAPGPPGPP.

The tract at residues 1–982 (GPMGPSGPRG…PGAPGPPGPP (982 aa)) is disordered. Positions 8–27 (PRGFQGPPGEPGEPGASGPM) are enriched in low complexity. The span at 39-53 (NGDDGEAGKPGRPGE) shows a compositional bias: basic and acidic residues. Ser81 bears the Phosphoserine mark. Low complexity-rich tracts occupy residues 89-105 (DAGP…PGEN) and 128-141 (PAGA…TGAA). The span at 143–155 (PPGPTGPAGPPGF) shows a compositional bias: pro residues. The span at 189–228 (AGAAGPAGNPGADGQPGAKGANGAPGIAGAPGFPGARGPS) shows a compositional bias: low complexity. Positions 294 to 303 (GERGGPGSRG) are enriched in gly residues. Composition is skewed to low complexity over residues 304 to 335 (FPGA…PGEA), 347 to 373 (KGIT…QDGR), 382 to 401 (ARGQ…AGEP), 425 to 437 (AGAQ…AGPA), 513 to 526 (APGA…PGIQ), 583 to 597 (SGPS…ARGA), 610 to 640 (AGFA…AGPA), 666 to 682 (SAGP…AGRV), and 727 to 751 (AGEK…QGIA). At Ser586 the chain carries Phosphoserine. 2 stretches are compositionally biased toward pro residues: residues 792–802 (PPGPIGPPGIA) and 838–853 (AGPP…PGPV). The segment covering 874–888 (IGPTGARGPAGPQGP) has biased composition (low complexity). Basic and acidic residues predominate over residues 889–900 (RGDKGETGEQGD). Positions 916–940 (PGEQGPAGASGPAGPRGPPGSAGAP) are enriched in low complexity. Positions 966–982 (PRGPPGPPGAPGPPGPP) are enriched in pro residues.

It belongs to the fibrillar collagen family. As to quaternary structure, trimers of one alpha 2(I) and two alpha 1(I) chains. Post-translationally, prolines at the third position of the tripeptide repeating unit (G-X-Y) are hydroxylated in some or all of the chains. Forms the fibrils of tendon, ligaments and bones. In bones, the fibrils are mineralized with calcium hydroxyapatite.

It localises to the secreted. It is found in the extracellular space. The protein resides in the extracellular matrix. Type I collagen is a member of group I collagen (fibrillar forming collagen). The protein is Collagen alpha-1(I) chain of Toxodon sp.